We begin with the raw amino-acid sequence, 522 residues long: Peptide chain release factor 3 (522 aa).

A tr-type G domain is found at A10–S277. GTP-binding positions include S19–T26, D87–H91, and N141–D144.

It belongs to the TRAFAC class translation factor GTPase superfamily. Classic translation factor GTPase family. PrfC subfamily.

It is found in the cytoplasm. Functionally, increases the formation of ribosomal termination complexes and stimulates activities of RF-1 and RF-2. It binds guanine nucleotides and has strong preference for UGA stop codons. It may interact directly with the ribosome. The stimulation of RF-1 and RF-2 is significantly reduced by GTP and GDP, but not by GMP. This chain is Peptide chain release factor 3, found in Listeria innocua serovar 6a (strain ATCC BAA-680 / CLIP 11262).